The primary structure comprises 187 residues: Threonylcarbamoyl-AMP synthase (187 aa).

Residues Gln-4–Gly-187 form the YrdC-like domain.

This sequence belongs to the SUA5 family. TsaC subfamily.

It localises to the cytoplasm. The catalysed reaction is L-threonine + hydrogencarbonate + ATP = L-threonylcarbamoyladenylate + diphosphate + H2O. In terms of biological role, required for the formation of a threonylcarbamoyl group on adenosine at position 37 (t(6)A37) in tRNAs that read codons beginning with adenine. Catalyzes the conversion of L-threonine, HCO(3)(-)/CO(2) and ATP to give threonylcarbamoyl-AMP (TC-AMP) as the acyladenylate intermediate, with the release of diphosphate. The sequence is that of Threonylcarbamoyl-AMP synthase from Pseudoalteromonas translucida (strain TAC 125).